Consider the following 66-residue polypeptide: LYR motif-containing protein PHYPADRAFT_186863 (66 aa).

The protein belongs to the complex I LYR family. LYRM9 subfamily.

The polypeptide is LYR motif-containing protein PHYPADRAFT_186863 (Physcomitrium patens (Spreading-leaved earth moss)).